The primary structure comprises 439 residues: Serine/threonine-protein kinase 2 (439 aa).

The 353-residue stretch at 87-439 (NDDFYHISTG…IFSDWINGGN (353 aa)) folds into the Protein kinase domain. ATP contacts are provided by residues 93 to 101 (ISTGGYGIV) and K117. D307 acts as the Proton acceptor in catalysis.

It belongs to the protein kinase superfamily. Ser/Thr protein kinase family. Poxviruses subfamily. Post-translationally, phosphorylated in vivo. Autophosphorylated in vitro.

Its subcellular location is the host endoplasmic reticulum. It localises to the host endoplasmic reticulum-Golgi intermediate compartment. The enzyme catalyses L-seryl-[protein] + ATP = O-phospho-L-seryl-[protein] + ADP + H(+). It catalyses the reaction L-threonyl-[protein] + ATP = O-phospho-L-threonyl-[protein] + ADP + H(+). Functionally, essential serine-protein kinase involved in the early stage of virion morphogenesis. The chain is Serine/threonine-protein kinase 2 (OPG054) from Vaccinia virus (strain Copenhagen) (VACV).